The sequence spans 674 residues: MDKAKAQQEIGKLRAEIERHNRLYYLEAKPEISDFEFDKLLKRLIMLEKEFPELVTPDSPSQRVGGGITKEFPTVVHRDPMLSLSNTYSIAEVADFCNRVEKLVAAEGGGTPEYVAELKYDGVAISLLYRDGLLVCGSTRGDGRQGDEITANLRTIPSIPLRLEMPDLPLFGTALSGEIEVRGEVYMRKDDFERLNEERPEEERFANPRNATAGTLKLQDSAEVARRRMSFVAYYLKGYDGEAPTHLKRLEQLKSMGFMTGAAAKLCKGMDEIADFIAEWSEKRWTLPYETDGVVLKLNEVSLWERLGATAKSPRWAIAYKYPAQQAKTVLQGVVFQVGRLGTITPVAELKPTRLAGSIVSRSTLHNFDEIKRLGVRIGDHVMIEKSGEVIPKVVSVVLDERPAETAEIEVPSECPVCGTRLERPEGEVNWYCPNEEGCPAQKRGRILHFASRNALDIQNLGESLVTQLVDRGLVSDAGDLYSLTQEQLAGLDRMAAKSAQNVLDALEKSKKQSYARLLFALGIRHVGAATARELAHACPSIDRLREMDEEALAAVPDIGPVIAASIRDFFAKPWVQAMLQKLAEAGLPMQAGEEKALVNNNFEGQSVIFTGALERHVRQEAEEMVRERGGRIVSSVSKKTTLVVAGKEAGSKLEKAIKLGVKVIDEDEFERML.

NAD(+)-binding positions include 34–38, 83–84, and E117; these read DFEFD and SL. K119 acts as the N6-AMP-lysine intermediate in catalysis. 4 residues coordinate NAD(+): R140, E184, K297, and K321. Positions 415, 418, 433, and 439 each coordinate Zn(2+). One can recognise a BRCT domain in the interval 598-674; the sequence is LVNNNFEGQS…IDEDEFERML (77 aa).

This sequence belongs to the NAD-dependent DNA ligase family. LigA subfamily. Mg(2+) is required as a cofactor. The cofactor is Mn(2+).

The catalysed reaction is NAD(+) + (deoxyribonucleotide)n-3'-hydroxyl + 5'-phospho-(deoxyribonucleotide)m = (deoxyribonucleotide)n+m + AMP + beta-nicotinamide D-nucleotide.. In terms of biological role, DNA ligase that catalyzes the formation of phosphodiester linkages between 5'-phosphoryl and 3'-hydroxyl groups in double-stranded DNA using NAD as a coenzyme and as the energy source for the reaction. It is essential for DNA replication and repair of damaged DNA. The protein is DNA ligase of Chlorobaculum tepidum (strain ATCC 49652 / DSM 12025 / NBRC 103806 / TLS) (Chlorobium tepidum).